Consider the following 342-residue polypeptide: tRNA dimethylallyltransferase (342 aa).

Residue 39-46 (GPTGSGKT) coordinates ATP. 41–46 (TGSGKT) is a substrate binding site. Residues 64 to 67 (DSMQ) form an interaction with substrate tRNA region.

This sequence belongs to the IPP transferase family. As to quaternary structure, monomer. Mg(2+) serves as cofactor.

The catalysed reaction is adenosine(37) in tRNA + dimethylallyl diphosphate = N(6)-dimethylallyladenosine(37) in tRNA + diphosphate. In terms of biological role, catalyzes the transfer of a dimethylallyl group onto the adenine at position 37 in tRNAs that read codons beginning with uridine, leading to the formation of N6-(dimethylallyl)adenosine (i(6)A). This chain is tRNA dimethylallyltransferase, found in Chlamydia abortus (strain DSM 27085 / S26/3) (Chlamydophila abortus).